Reading from the N-terminus, the 217-residue chain is Proteasome subunit beta (217 aa).

A propeptide spans 1-14 (MIANNDQYKEYMKG) (removed in mature form; by autocatalysis). Residue Thr15 is the Nucleophile of the active site.

This sequence belongs to the peptidase T1B family. The 20S proteasome core is composed of 14 alpha and 14 beta subunits that assemble into four stacked heptameric rings, resulting in a barrel-shaped structure. The two inner rings, each composed of seven catalytic beta subunits, are sandwiched by two outer rings, each composed of seven alpha subunits. The catalytic chamber with the active sites is on the inside of the barrel. Has a gated structure, the ends of the cylinder being occluded by the N-termini of the alpha-subunits. Is capped at one or both ends by the proteasome regulatory ATPase, PAN.

The protein resides in the cytoplasm. The enzyme catalyses Cleavage of peptide bonds with very broad specificity.. The formation of the proteasomal ATPase PAN-20S proteasome complex, via the docking of the C-termini of PAN into the intersubunit pockets in the alpha-rings, triggers opening of the gate for substrate entry. Interconversion between the open-gate and close-gate conformations leads to a dynamic regulation of the 20S proteasome proteolysis activity. Functionally, component of the proteasome core, a large protease complex with broad specificity involved in protein degradation. This is Proteasome subunit beta from Methanococcus aeolicus (strain ATCC BAA-1280 / DSM 17508 / OCM 812 / Nankai-3).